A 194-amino-acid polypeptide reads, in one-letter code: Peptidyl-tRNA hydrolase (194 aa).

Residue histidine 17 participates in tRNA binding. Histidine 22 functions as the Proton acceptor in the catalytic mechanism. TRNA is bound by residues phenylalanine 68, asparagine 70, and asparagine 116.

It belongs to the PTH family. As to quaternary structure, monomer.

The protein localises to the cytoplasm. The enzyme catalyses an N-acyl-L-alpha-aminoacyl-tRNA + H2O = an N-acyl-L-amino acid + a tRNA + H(+). Its function is as follows. Hydrolyzes ribosome-free peptidyl-tRNAs (with 1 or more amino acids incorporated), which drop off the ribosome during protein synthesis, or as a result of ribosome stalling. Functionally, catalyzes the release of premature peptidyl moieties from peptidyl-tRNA molecules trapped in stalled 50S ribosomal subunits, and thus maintains levels of free tRNAs and 50S ribosomes. The chain is Peptidyl-tRNA hydrolase from Xanthomonas oryzae pv. oryzae (strain MAFF 311018).